The chain runs to 150 residues: Thyroid hormone-inducible hepatic protein (150 aa).

The tract at residues Lys83–Glu104 is disordered. Position 90 is a phosphoserine (Ser90). The span at Ser90–Glu104 shows a compositional bias: acidic residues.

It belongs to the SPOT14 family. Homodimer. Heterodimer with MID1IP1. Interacts with THRB and PLAGL1. As to expression, mainly expressed in tissues that synthesize triglycerides.

Its subcellular location is the nucleus. The protein localises to the cytoplasm. Plays a role in the regulation of lipogenesis, especially in lactating mammary gland. Important for the biosynthesis of triglycerides with medium-length fatty acid chains. May modulate lipogenesis by interacting with MID1IP1 and preventing its interaction with ACACA. May function as transcriptional coactivator. May modulate the transcription factor activity of THRB. This is Thyroid hormone-inducible hepatic protein (Thrsp) from Mus musculus (Mouse).